We begin with the raw amino-acid sequence, 868 residues long: mRNA-capping enzyme (868 aa).

Lys282 serves as the catalytic N6-GMP-lysine intermediate. The 275-residue stretch at 594-868 (GIYRAQTALI…LFGFICLRKN (275 aa)) folds into the mRNA cap 0 methyltransferase domain. Residues Lys607, Gly624, Asp646, and 710-712 (LFI) each bind S-adenosyl-L-methionine.

The protein in the N-terminal section; belongs to the dsDNA virus mRNA guanylyltransferase family. This sequence in the C-terminal section; belongs to the class I-like SAM-binding methyltransferase superfamily. mRNA cap 0 methyltransferase family. Part of the viral DNA-directed RNA polymerase that consists of 8 polII-like subunits (RPB1, RPB2, RPB3, RPB5, RPB6, RPB7, RPB9, RPB10), a capping enzyme and a termination factor.

The protein localises to the virion. It carries out the reaction a 5'-end triphospho-ribonucleoside in mRNA + H2O = a 5'-end diphospho-ribonucleoside in mRNA + phosphate + H(+). The enzyme catalyses a 5'-end diphospho-ribonucleoside in mRNA + GTP + H(+) = a 5'-end (5'-triphosphoguanosine)-ribonucleoside in mRNA + diphosphate. The catalysed reaction is a 5'-end (5'-triphosphoguanosine)-ribonucleoside in mRNA + S-adenosyl-L-methionine = a 5'-end (N(7)-methyl 5'-triphosphoguanosine)-ribonucleoside in mRNA + S-adenosyl-L-homocysteine. It functions in the pathway mRNA processing; mRNA capping. In terms of biological role, probably catalyzes the second reaction in the mRNA cap formation pathway. Forms a covalent complex with GTP. The chain is mRNA-capping enzyme from African swine fever virus (isolate Tick/South Africa/Pretoriuskop Pr4/1996) (ASFV).